Here is a 503-residue protein sequence, read N- to C-terminus: Geissoschizine oxidase (503 aa).

A helical transmembrane segment spans residues Phe7–Ile27. Cys441 provides a ligand contact to heme.

The protein belongs to the cytochrome P450 family. The cofactor is heme.

It localises to the membrane. The enzyme catalyses (19E)-geissoschizine + reduced [NADPH--hemoprotein reductase] + O2 = akuammicine + formate + oxidized [NADPH--hemoprotein reductase] + H2O + H(+). It catalyses the reaction (19E)-geissoschizine + reduced [NADPH--hemoprotein reductase] + O2 = 3,17-didehydrostemmadenine + oxidized [NADPH--hemoprotein reductase] + 2 H2O. It carries out the reaction 3,17-didehydrostemmadenine = 17-dehydropreakuammicine. Its pathway is alkaloid biosynthesis. Monooxygenase involved in the biosynthesis of curare monoterpene indole alkaloids (MIAs), natural products such as diaboline, a pharmacologically active compound used to regulate blood pressure. Curare alkaloids act as animal glycine receptor antagonists. Catalyzes the conversion of geissoschizine to dehydropreakuammicine by cyclization, which is spontaneously converted into akuammicine by aromatization. The polypeptide is Geissoschizine oxidase (Strychnos sp).